The chain runs to 103 residues: Large ribosomal subunit protein bL21 (103 aa).

It belongs to the bacterial ribosomal protein bL21 family. Part of the 50S ribosomal subunit. Contacts protein L20.

In terms of biological role, this protein binds to 23S rRNA in the presence of protein L20. The chain is Large ribosomal subunit protein bL21 from Mycobacterium leprae (strain Br4923).